Consider the following 367-residue polypeptide: Damage-control phosphatase At2g17340 (367 aa).

Methionine 1 carries the post-translational modification N-acetylmethionine. Mn(2+) is bound by residues aspartate 220, asparagine 221, and aspartate 256. The short motif at 318-322 (EGMGR) is the Subfamily II EGMGR motif element.

It belongs to the damage-control phosphatase family. Phosphopantetheine phosphatase II subfamily. In terms of assembly, multimer. Mn(2+) serves as cofactor. The cofactor is Ni(2+).

Activity is strongly promoted by Co(2+), Ni(2+), Mg(2+), Cu(2+) and Mn(2+). Activity is inhibited by EDTA. Metal-dependent phosphatase with probable damage-control functions. Shows phosphatase activity against several substrates, including sugar phosphates and p-nitrophenyl phosphate(pNPP). Prefers sugar phosphate substrates, including the extremely potent glycating agents ribose-5-phosphate and erythrose-4-phosphate. The polypeptide is Damage-control phosphatase At2g17340 (Arabidopsis thaliana (Mouse-ear cress)).